The chain runs to 178 residues: Putative magnesium-dependent phosphatase YER134C (178 aa).

D11 serves as the catalytic Nucleophile. Position 11 (D11) interacts with Mg(2+). Phosphate contacts are provided by L12, D13, S74, and R75. D13 provides a ligand contact to Mg(2+). D13 serves as the catalytic Proton donor. R75 provides a ligand contact to substrate. D141 contacts Mg(2+).

This sequence belongs to the HAD-like hydrolase superfamily.

The protein localises to the cytoplasm. It localises to the nucleus. The enzyme catalyses O-phospho-L-tyrosyl-[protein] + H2O = L-tyrosyl-[protein] + phosphate. In terms of biological role, magnesium-dependent phosphatase which may act as a tyrosine phosphatase. The polypeptide is Putative magnesium-dependent phosphatase YER134C (Saccharomyces cerevisiae (strain ATCC 204508 / S288c) (Baker's yeast)).